A 338-amino-acid chain; its full sequence is Lipoate-protein ligase A (338 aa).

A BPL/LPL catalytic domain is found at 29–216 (PATQRVLFLW…AFFSHYGERV (188 aa)). ATP contacts are provided by residues R71, 76–79 (GAVF), and K134. Residue K134 participates in (R)-lipoate binding.

The protein belongs to the LplA family. In terms of assembly, monomer.

Its subcellular location is the cytoplasm. The enzyme catalyses L-lysyl-[lipoyl-carrier protein] + (R)-lipoate + ATP = N(6)-[(R)-lipoyl]-L-lysyl-[lipoyl-carrier protein] + AMP + diphosphate + H(+). It participates in protein modification; protein lipoylation via exogenous pathway; protein N(6)-(lipoyl)lysine from lipoate: step 1/2. The protein operates within protein modification; protein lipoylation via exogenous pathway; protein N(6)-(lipoyl)lysine from lipoate: step 2/2. In terms of biological role, catalyzes both the ATP-dependent activation of exogenously supplied lipoate to lipoyl-AMP and the transfer of the activated lipoyl onto the lipoyl domains of lipoate-dependent enzymes. This is Lipoate-protein ligase A from Klebsiella pneumoniae subsp. pneumoniae (strain ATCC 700721 / MGH 78578).